The sequence spans 318 residues: Porphobilinogen deaminase (318 aa).

Position 241 is an S-(dipyrrolylmethanemethyl)cysteine (Cys241).

The protein belongs to the HMBS family. In terms of assembly, monomer. It depends on dipyrromethane as a cofactor.

The enzyme catalyses 4 porphobilinogen + H2O = hydroxymethylbilane + 4 NH4(+). It participates in porphyrin-containing compound metabolism; protoporphyrin-IX biosynthesis; coproporphyrinogen-III from 5-aminolevulinate: step 2/4. Tetrapolymerization of the monopyrrole PBG into the hydroxymethylbilane pre-uroporphyrinogen in several discrete steps. This chain is Porphobilinogen deaminase, found in Geotalea daltonii (strain DSM 22248 / JCM 15807 / FRC-32) (Geobacter daltonii).